The primary structure comprises 101 residues: Small ribosomal subunit protein uS14 (101 aa).

Positions 1–26 are disordered; it reads MAKVSSIQKNKSRQKKSQSLHNKRSE. Over residues 10 to 22 the composition is skewed to basic residues; the sequence is NKSRQKKSQSLHN.

Belongs to the universal ribosomal protein uS14 family. As to quaternary structure, part of the 30S ribosomal subunit. Contacts proteins S3 and S10.

In terms of biological role, binds 16S rRNA, required for the assembly of 30S particles and may also be responsible for determining the conformation of the 16S rRNA at the A site. This is Small ribosomal subunit protein uS14 from Rickettsia prowazekii (strain Madrid E).